A 441-amino-acid polypeptide reads, in one-letter code: Inositol hexakisphosphate kinase 1 (441 aa).

A disordered region spans residues 100–175 (ETVEQDDTTE…MLDGNSGLSS (76 aa)). Residues 113–123 (PRRKHSRRSLH) are compositionally biased toward basic residues. Residues 137–149 (SLSLETSESSQEA) show a composition bias toward low complexity. Residues 150–160 (KSPKVELHSHS) are compositionally biased toward basic and acidic residues. Phosphoserine is present on Ser151. 220-228 (PCVLDLKMG) serves as a coordination point for substrate. A disordered region spans residues 370-392 (SSCGPSTSPSNTSPEAGPSSQPK). The segment covering 372-391 (CGPSTSPSNTSPEAGPSSQP) has biased composition (polar residues).

This sequence belongs to the inositol phosphokinase (IPK) family.

It is found in the cytoplasm. Its subcellular location is the nucleus. The enzyme catalyses 1D-myo-inositol hexakisphosphate + ATP = 5-diphospho-1D-myo-inositol 1,2,3,4,6-pentakisphosphate + ADP. The catalysed reaction is 1-diphospho-1D-myo-inositol 2,3,4,5,6-pentakisphosphate + ATP + H(+) = 1,5-bis(diphospho)-1D-myo-inositol 2,3,4,6-tetrakisphosphate + ADP. Converts inositol hexakisphosphate (InsP6) to diphosphoinositol pentakisphosphate (InsP7/PP-InsP5). Converts 1,3,4,5,6-pentakisphosphate (InsP5) to PP-InsP4. In Homo sapiens (Human), this protein is Inositol hexakisphosphate kinase 1 (IP6K1).